The chain runs to 114 residues: Large ribosomal subunit protein bL19 (114 aa).

The protein belongs to the bacterial ribosomal protein bL19 family.

Functionally, this protein is located at the 30S-50S ribosomal subunit interface and may play a role in the structure and function of the aminoacyl-tRNA binding site. The polypeptide is Large ribosomal subunit protein bL19 (Halalkalibacterium halodurans (strain ATCC BAA-125 / DSM 18197 / FERM 7344 / JCM 9153 / C-125) (Bacillus halodurans)).